Reading from the N-terminus, the 89-residue chain is Sodium channel toxin To13 (89 aa).

Residues 1–18 form the signal peptide; that stretch reads MKTLFLIITSFILLEVEG. In terms of domain architecture, LCN-type CS-alpha/beta spans 20–87; that stretch reads KNGYPRDSKG…TWKNKEPKCK (68 aa). Disulfide bonds link Cys30/Cys86, Cys34/Cys60, Cys45/Cys67, and Cys49/Cys69.

Belongs to the long (4 C-C) scorpion toxin superfamily. Sodium channel inhibitor family. Expressed by the venom gland.

It is found in the secreted. Functionally, inhibits voltage-gated sodium channels (Nav). This is Sodium channel toxin To13 from Tityus obscurus (Amazonian scorpion).